We begin with the raw amino-acid sequence, 712 residues long: MLAGLKVKKQELANSSDVTLPDRPLSPPLTAPPTMKSAEFFEMLEKMQGIKLEEQRPGPQKNKDDYIPYPSIDEVVEKGGPYPLIILPQFGGYWIEDPENVGTPTSLGSSVYEEEEEDSLSPNTFGYKLECRGEARAYRRHFLGKDHLNFYCTGSSLGNLILSIKCEEAEGMEYLRIILRSKLKTVHERIPLAGLSKLPSVPQIAKAFCDDAVGLKFNPVLYPKASQMIVSYDEHDVNNTFKFGVIYQKARQTLEEELFGNNEESPAFKEFLDLLGDTITLQDFKGFRGGLDVTHGQTGVESVYTTFRDREIMFHVSTKLPFTDGDTQQLQRKRHIGNDIVAIIFQEENTPFVPDMIASNFLHAYIVVQADNPGTETPSYKVSVTAREDVPAFGPPLPSPPVFQKGAEFREFLLTKLTNAENACCKSDKFAKLEDRTRAALLDNLHDELHTHTQVMLGMGPEEDKFENGGHGGFLESFKRAIRVRSHSMETMVGSQRKLHGGNLPGSLSGGIVHNSMEVTKTTFSPPVAAATAKNQSRSPIKRRSGLFPRLHSGSEGQGDSRTRCDSASSTPKTPDGGHSSQEIKSETSSNPSSPEICPNKEKPFIKLKENGRANISRSSSSTSSFSSTAGEGEAMEECDSGSSQPSTTSPFKQEVFAYSPSPSSESPSLGAAATPIIMSRSPTDAKSRNSPRSNLKFRFDKLSHASSSAGH.

Positions 1 to 33 (MLAGLKVKKQELANSSDVTLPDRPLSPPLTAPP) are disordered. Ser-26 bears the Phosphoserine mark. Thr-30 carries the phosphothreonine modification. One can recognise a Rap-GAP domain in the interval 229-445 (IVSYDEHDVN…RTRAALLDNL (217 aa)). 7 positions are modified to phosphoserine: Ser-488, Ser-495, Ser-525, Ser-539, Ser-545, Ser-593, and Ser-594. Residues 529-712 (AAATAKNQSR…LSHASSSAGH (184 aa)) form a disordered region. Residues 566–594 (DSASSTPKTPDGGHSSQEIKSETSSNPSS) show a composition bias toward polar residues. The segment covering 599–612 (PNKEKPFIKLKENG) has biased composition (basic and acidic residues). Residues 617 to 629 (SRSSSSTSSFSST) show a composition bias toward low complexity. A compositionally biased stretch (polar residues) spans 641 to 652 (SGSSQPSTTSPF). Positions 660-669 (SPSPSSESPS) are enriched in low complexity. Polar residues predominate over residues 681–694 (RSPTDAKSRNSPRS).

The protein resides in the cytoplasm. In terms of biological role, GTPase activator for the nuclear Ras-related regulatory protein RAP-1A (KREV-1), converting it to the putatively inactive GDP-bound state. The protein is Rap1 GTPase-activating protein 2 (Rap1gap2) of Mus musculus (Mouse).